Here is a 128-residue protein sequence, read N- to C-terminus: Small ribosomal subunit protein bS6 (128 aa).

Residues 97-128 (TTPSPMMKEEKSRSLTAAPATDEAKPAEAESA) are disordered. Residues 118–128 (DEAKPAEAESA) are compositionally biased toward basic and acidic residues.

Belongs to the bacterial ribosomal protein bS6 family.

Binds together with bS18 to 16S ribosomal RNA. This chain is Small ribosomal subunit protein bS6, found in Aromatoleum aromaticum (strain DSM 19018 / LMG 30748 / EbN1) (Azoarcus sp. (strain EbN1)).